Reading from the N-terminus, the 339-residue chain is DNA-directed RNA polymerase subunit alpha (339 aa).

The alpha N-terminal domain (alpha-NTD) stretch occupies residues 1–235; sequence MTIQKNWQEL…DQLNVFVNFE (235 aa). The alpha C-terminal domain (alpha-CTD) stretch occupies residues 251–339; it reads FNPAFLKKVD…ELAKRFEDHY (89 aa).

Belongs to the RNA polymerase alpha chain family. As to quaternary structure, homodimer. The RNAP catalytic core consists of 2 alpha, 1 beta, 1 beta' and 1 omega subunit. When a sigma factor is associated with the core the holoenzyme is formed, which can initiate transcription.

It carries out the reaction RNA(n) + a ribonucleoside 5'-triphosphate = RNA(n+1) + diphosphate. In terms of biological role, DNA-dependent RNA polymerase catalyzes the transcription of DNA into RNA using the four ribonucleoside triphosphates as substrates. The protein is DNA-directed RNA polymerase subunit alpha of Rhodopseudomonas palustris (strain HaA2).